Here is a 93-residue protein sequence, read N- to C-terminus: MKLFLVLIILLFEVLTDGARLKKCFNNVTGYCRKKCKVGEIHEIGCLSGKLCCVNDEENKKHVPFKKPHQQPVEKLSVQQDYVILPTITIFTV.

The N-terminal stretch at 1 to 18 is a signal peptide; it reads MKLFLVLIILLFEVLTDG. 3 cysteine pairs are disulfide-bonded: Cys-24-Cys-52, Cys-32-Cys-46, and Cys-36-Cys-53.

The protein belongs to the beta-defensin family.

The protein localises to the secreted. Its function is as follows. Has antibacterial activity. This is Beta-defensin 128 (DEFB128) from Macaca fascicularis (Crab-eating macaque).